The sequence spans 206 residues: Probable GTP-binding protein EngB (206 aa).

The region spanning 24-198 (QGREVAFAGR…HARLDEWLGL (175 aa)) is the EngB-type G domain. GTP-binding positions include 32–39 (GRSNVGKS), 59–63 (GRTQL), 77–80 (DLPG), 144–147 (TKAD), and 177–179 (FSA). Residues serine 39 and threonine 61 each coordinate Mg(2+).

This sequence belongs to the TRAFAC class TrmE-Era-EngA-EngB-Septin-like GTPase superfamily. EngB GTPase family. Mg(2+) is required as a cofactor.

Necessary for normal cell division and for the maintenance of normal septation. This chain is Probable GTP-binding protein EngB, found in Alkalilimnicola ehrlichii (strain ATCC BAA-1101 / DSM 17681 / MLHE-1).